The sequence spans 240 residues: UDP-2,3-diacylglucosamine hydrolase (240 aa).

Mn(2+) contacts are provided by D8, H10, D41, N79, and H114. Position 79-80 (79-80 (NR)) interacts with substrate. Residues D122, S160, N164, K167, and H195 each coordinate substrate. Positions 195 and 197 each coordinate Mn(2+).

This sequence belongs to the LpxH family. Mn(2+) is required as a cofactor.

The protein localises to the cell inner membrane. It catalyses the reaction UDP-2-N,3-O-bis[(3R)-3-hydroxytetradecanoyl]-alpha-D-glucosamine + H2O = 2-N,3-O-bis[(3R)-3-hydroxytetradecanoyl]-alpha-D-glucosaminyl 1-phosphate + UMP + 2 H(+). Its pathway is glycolipid biosynthesis; lipid IV(A) biosynthesis; lipid IV(A) from (3R)-3-hydroxytetradecanoyl-[acyl-carrier-protein] and UDP-N-acetyl-alpha-D-glucosamine: step 4/6. Functionally, hydrolyzes the pyrophosphate bond of UDP-2,3-diacylglucosamine to yield 2,3-diacylglucosamine 1-phosphate (lipid X) and UMP by catalyzing the attack of water at the alpha-P atom. Involved in the biosynthesis of lipid A, a phosphorylated glycolipid that anchors the lipopolysaccharide to the outer membrane of the cell. In Salmonella paratyphi A (strain ATCC 9150 / SARB42), this protein is UDP-2,3-diacylglucosamine hydrolase.